Here is an 89-residue protein sequence, read N- to C-terminus: MSITAERKTALIKDYARGGTDTGSPEVQVAILTERIANLTGHFKTHTKDNHSRRGLLKLVSQRRSLLDYLKRKDEGRYRTLIERLGIRR.

This sequence belongs to the universal ribosomal protein uS15 family. Part of the 30S ribosomal subunit. Forms a bridge to the 50S subunit in the 70S ribosome, contacting the 23S rRNA.

In terms of biological role, one of the primary rRNA binding proteins, it binds directly to 16S rRNA where it helps nucleate assembly of the platform of the 30S subunit by binding and bridging several RNA helices of the 16S rRNA. Forms an intersubunit bridge (bridge B4) with the 23S rRNA of the 50S subunit in the ribosome. The protein is Small ribosomal subunit protein uS15 of Methylobacterium sp. (strain 4-46).